Reading from the N-terminus, the 45-residue chain is Enterotoxin (45 aa).

As to quaternary structure, one of 3 components (of 35, 45 and 105 kDa) of the enterotoxin.

Its function is as follows. One of 3 components required for cytotoxicity (tested in African green monkey Vero cells); the complex is not hemolytic. This chain is Enterotoxin, found in Bacillus cereus.